We begin with the raw amino-acid sequence, 547 residues long: Malolactic enzyme (547 aa).

The Proton donor role is filled by Y92. K165 serves as the catalytic Proton acceptor. K165 contributes to the substrate binding site. The Mn(2+) site is built by E236, D237, and D260. NAD(+) contacts are provided by residues 293-296 (AGTA), N405, and N450. N450 provides a ligand contact to substrate.

This sequence belongs to the malic enzymes family. As to quaternary structure, homodimer. Mn(2+) serves as cofactor. The cofactor is NAD(+).

The enzyme catalyses (S)-malate + H(+) = (S)-lactate + CO2. Involved in the malolactic fermentation (MLF) of wine, which results in a natural decrease in acidity and favorable changes in wine flavors. Catalyzes the decarboxylation of L-malate to L-lactate. The polypeptide is Malolactic enzyme (Lactiplantibacillus plantarum (strain ATCC BAA-793 / NCIMB 8826 / WCFS1) (Lactobacillus plantarum)).